The sequence spans 336 residues: Dihydroorotate dehydrogenase (quinone) (336 aa).

FMN is bound by residues 62 to 66 (AGLDK) and Thr-86. Residue Lys-66 coordinates substrate. 111 to 115 (NRMGF) serves as a coordination point for substrate. 2 residues coordinate FMN: Asn-139 and Asn-172. Asn-172 contributes to the substrate binding site. Catalysis depends on Ser-175, which acts as the Nucleophile. Asn-177 is a substrate binding site. Residues Lys-217 and Thr-245 each coordinate FMN. 246–247 (NT) lines the substrate pocket. FMN contacts are provided by residues Gly-268, Gly-297, and 318-319 (YS).

It belongs to the dihydroorotate dehydrogenase family. Type 2 subfamily. Monomer. The cofactor is FMN.

Its subcellular location is the cell membrane. It carries out the reaction (S)-dihydroorotate + a quinone = orotate + a quinol. It participates in pyrimidine metabolism; UMP biosynthesis via de novo pathway; orotate from (S)-dihydroorotate (quinone route): step 1/1. In terms of biological role, catalyzes the conversion of dihydroorotate to orotate with quinone as electron acceptor. This is Dihydroorotate dehydrogenase (quinone) from Klebsiella pneumoniae subsp. pneumoniae (strain ATCC 700721 / MGH 78578).